We begin with the raw amino-acid sequence, 147 residues long: Two-component response regulator ORR11 (147 aa).

In terms of domain architecture, Response regulatory spans 29–146; sequence HVLAVDDSSV…DVSRLFSRVL (118 aa). Aspartate 79 is subject to 4-aspartylphosphate.

It belongs to the ARR family. Type-A subfamily. In terms of processing, two-component system major event consists of a His-to-Asp phosphorelay between a sensor histidine kinase (HK) and a response regulator (RR). In plants, the His-to-Asp phosphorelay involves an additional intermediate named Histidine-containing phosphotransfer protein (HPt). This multistep phosphorelay consists of a His-Asp-His-Asp sequential transfer of a phosphate group between first a His and an Asp of the HK protein, followed by the transfer to a conserved His of the HPt protein and finally the transfer to an Asp in the receiver domain of the RR protein.

Functionally, functions as a response regulator involved in His-to-Asp phosphorelay signal transduction system. Phosphorylation of the Asp residue in the receiver domain activates the ability of the protein to promote the transcription of target genes. Type-A response regulators seem to act as negative regulators of the cytokinin signaling. The sequence is that of Two-component response regulator ORR11 from Oryza sativa subsp. indica (Rice).